The primary structure comprises 252 residues: Imidazole glycerol phosphate synthase subunit HisF (252 aa).

Active-site residues include Asp11 and Asp130.

This sequence belongs to the HisA/HisF family. In terms of assembly, heterodimer of HisH and HisF.

It localises to the cytoplasm. The enzyme catalyses 5-[(5-phospho-1-deoxy-D-ribulos-1-ylimino)methylamino]-1-(5-phospho-beta-D-ribosyl)imidazole-4-carboxamide + L-glutamine = D-erythro-1-(imidazol-4-yl)glycerol 3-phosphate + 5-amino-1-(5-phospho-beta-D-ribosyl)imidazole-4-carboxamide + L-glutamate + H(+). Its pathway is amino-acid biosynthesis; L-histidine biosynthesis; L-histidine from 5-phospho-alpha-D-ribose 1-diphosphate: step 5/9. In terms of biological role, IGPS catalyzes the conversion of PRFAR and glutamine to IGP, AICAR and glutamate. The HisF subunit catalyzes the cyclization activity that produces IGP and AICAR from PRFAR using the ammonia provided by the HisH subunit. The chain is Imidazole glycerol phosphate synthase subunit HisF from Staphylococcus aureus (strain USA300).